The chain runs to 490 residues: Glutamyl-tRNA(Gln) amidotransferase subunit A (490 aa).

Active-site charge relay system residues include Lys79 and Ser154. The active-site Acyl-ester intermediate is Ser178.

Belongs to the amidase family. GatA subfamily. Heterotrimer of A, B and C subunits.

It carries out the reaction L-glutamyl-tRNA(Gln) + L-glutamine + ATP + H2O = L-glutaminyl-tRNA(Gln) + L-glutamate + ADP + phosphate + H(+). Functionally, allows the formation of correctly charged Gln-tRNA(Gln) through the transamidation of misacylated Glu-tRNA(Gln) in organisms which lack glutaminyl-tRNA synthetase. The reaction takes place in the presence of glutamine and ATP through an activated gamma-phospho-Glu-tRNA(Gln). In Roseiflexus castenholzii (strain DSM 13941 / HLO8), this protein is Glutamyl-tRNA(Gln) amidotransferase subunit A.